A 314-amino-acid polypeptide reads, in one-letter code: Methionyl-tRNA formyltransferase (314 aa).

112–115 (SLLP) is a (6S)-5,6,7,8-tetrahydrofolate binding site.

This sequence belongs to the Fmt family.

It carries out the reaction L-methionyl-tRNA(fMet) + (6R)-10-formyltetrahydrofolate = N-formyl-L-methionyl-tRNA(fMet) + (6S)-5,6,7,8-tetrahydrofolate + H(+). Attaches a formyl group to the free amino group of methionyl-tRNA(fMet). The formyl group appears to play a dual role in the initiator identity of N-formylmethionyl-tRNA by promoting its recognition by IF2 and preventing the misappropriation of this tRNA by the elongation apparatus. The protein is Methionyl-tRNA formyltransferase of Aeromonas hydrophila subsp. hydrophila (strain ATCC 7966 / DSM 30187 / BCRC 13018 / CCUG 14551 / JCM 1027 / KCTC 2358 / NCIMB 9240 / NCTC 8049).